The following is a 251-amino-acid chain: tRNA (guanine-N(7)-)-methyltransferase (251 aa).

The S-adenosyl-L-methionine site is built by Glu80, Glu105, Asp132, and Asp155. Asp155 is an active-site residue. Substrate-binding positions include Lys159, Asp191, and 228–231; that span reads TKFE.

This sequence belongs to the class I-like SAM-binding methyltransferase superfamily. TrmB family.

It carries out the reaction guanosine(46) in tRNA + S-adenosyl-L-methionine = N(7)-methylguanosine(46) in tRNA + S-adenosyl-L-homocysteine. It participates in tRNA modification; N(7)-methylguanine-tRNA biosynthesis. Functionally, catalyzes the formation of N(7)-methylguanine at position 46 (m7G46) in tRNA. This is tRNA (guanine-N(7)-)-methyltransferase from Histophilus somni (strain 129Pt) (Haemophilus somnus).